A 383-amino-acid chain; its full sequence is Glutamate 5-kinase (383 aa).

Residue Lys17 coordinates ATP. Positions 64, 151, and 165 each coordinate substrate. ATP is bound at residue 185–186 (SD). The PUA domain occupies 291 to 367 (SGTIRVDAGA…DEIEGILGYN (77 aa)).

This sequence belongs to the glutamate 5-kinase family.

The protein resides in the cytoplasm. The enzyme catalyses L-glutamate + ATP = L-glutamyl 5-phosphate + ADP. It functions in the pathway amino-acid biosynthesis; L-proline biosynthesis; L-glutamate 5-semialdehyde from L-glutamate: step 1/2. Its function is as follows. Catalyzes the transfer of a phosphate group to glutamate to form L-glutamate 5-phosphate. The sequence is that of Glutamate 5-kinase from Methanosarcina barkeri (strain Fusaro / DSM 804).